Here is a 153-residue protein sequence, read N- to C-terminus: MKTFVLHIFIFALVAFASASRDSARKIGSQYDNYATCLAEHSLTEDDIFSIGEVSSGQHKTNHEDTELHKNGCVMQCLLEKDGLMSGADYDEEKMREDYIKETGAQPGDQRIEALNACMQETKDMEDKCDKSLLLVACVLAAEAVLADSNEGA.

A signal peptide spans 1–19 (MKTFVLHIFIFALVAFASA). Intrachain disulfides connect Cys-37–Cys-77, Cys-73–Cys-129, and Cys-118–Cys-138.

The protein belongs to the PBP/GOBP family. Homodimer.

It localises to the secreted. Its function is as follows. Colony queen number, a major feature of social organization, is associated with worker genotype for Gp-9. Colonies are headed by either a single reproductive queen (monogyne form) or multiple queens (polygyne form). Differences in worker Gp-9 genotypes between social forms may cause differences in workers' abilities to recognize queens and regulate their numbers. This Solenopsis invicta (Red imported fire ant) protein is Pheromone-binding protein Gp-9.